A 429-amino-acid chain; its full sequence is Glutamate-1-semialdehyde 2,1-aminomutase 2 (429 aa).

Lys-268 is modified (N6-(pyridoxal phosphate)lysine).

This sequence belongs to the class-III pyridoxal-phosphate-dependent aminotransferase family. HemL subfamily. Homodimer. Requires pyridoxal 5'-phosphate as cofactor.

The protein localises to the cytoplasm. The catalysed reaction is (S)-4-amino-5-oxopentanoate = 5-aminolevulinate. It participates in porphyrin-containing compound metabolism; protoporphyrin-IX biosynthesis; 5-aminolevulinate from L-glutamyl-tRNA(Glu): step 2/2. The chain is Glutamate-1-semialdehyde 2,1-aminomutase 2 from Listeria monocytogenes serotype 4a (strain HCC23).